The sequence spans 516 residues: Putative glucosylceramidase 2 (516 aa).

A signal peptide spans 1-23; sequence MSIAWSCFVLGLFALASLQVALA. Glu-254 functions as the Proton donor in the catalytic mechanism. Catalysis depends on Glu-358, which acts as the Nucleophile.

Belongs to the glycosyl hydrolase 30 family.

The enzyme catalyses a beta-D-glucosylceramide + H2O = an N-acyl-sphingoid base + D-glucose. It catalyses the reaction a beta-D-glucosyl-(1&lt;-&gt;1')-N-acylsphing-4-enine + H2O = an N-acylsphing-4-enine + D-glucose. The catalysed reaction is an N-acyl-1-beta-D-glucosyl-15-methylhexadecasphing-4-enine + H2O = an N-acyl-15-methylhexadecasphing-4-enine + D-glucose. The protein operates within lipid metabolism; sphingolipid metabolism. In terms of biological role, glucosylceramidase that catalyzes the hydrolysis of glucosylceramides into free ceramides and glucose. C.elegans contain specific sphingoid bases, which are unique or different in structure compared to the sphingoid bases found in other animals. Two examples of these distinctive compounds are: 15-methylhexadecasphinganine and 15-methylhexadecasphing-4-enine. This chain is Putative glucosylceramidase 2 (gba-2), found in Caenorhabditis elegans.